The sequence spans 879 residues: DNA double-strand break repair Rad50 ATPase (879 aa).

ATP contacts are provided by residues 32–38 and Q139; that span reads NGAGKSS. Coiled coils occupy residues 184-304 and 342-436; these read IELQ…NKIK and EIKG…NQVK. The Zinc-hook domain maps to 394-492; the sequence is LQKLNEDLNN…LISELNQIIN (99 aa). Zn(2+)-binding residues include C440 and C443. A coiled-coil region spans residues 502-722; that stretch reads IRNLADYNNL…LITAYDKLKK (221 aa). Position 786-791 (786-791) interacts with ATP; that stretch reads LLSGGE.

This sequence belongs to the SMC family. RAD50 subfamily. In terms of assembly, homodimer. Forms a heterotetramer composed of two Mre11 subunits and two Rad50 subunits. Zn(2+) is required as a cofactor.

In terms of biological role, part of the Rad50/Mre11 complex, which is involved in the early steps of DNA double-strand break (DSB) repair. The complex may facilitate opening of the processed DNA ends to aid in the recruitment of HerA and NurA. Rad50 controls the balance between DNA end bridging and DNA resection via ATP-dependent structural rearrangements of the Rad50/Mre11 complex. In Sulfurisphaera tokodaii (strain DSM 16993 / JCM 10545 / NBRC 100140 / 7) (Sulfolobus tokodaii), this protein is DNA double-strand break repair Rad50 ATPase.